Consider the following 213-residue polypeptide: Nicolin-1 (213 aa).

In terms of assembly, part of the neuronal tubulin polyglutamylase complex which contains TPGS1, TPGS2, TTLL1, LRRC49 and NICN1. High expression level is found in brain, testis, liver and kidney. Weak expression in spleen, leukocytes, small intestin and colon.

Its subcellular location is the nucleus. The sequence is that of Nicolin-1 (Nicn1) from Mus musculus (Mouse).